We begin with the raw amino-acid sequence, 1770 residues long: Transposon Ty2-OR2 Gag-Pol polyprotein (1770 aa).

2 disordered regions span residues 1–88 (MESQ…YQQH) and 359–449 (QHSE…SNDE). Composition is skewed to polar residues over residues 19-39 (ASVTSKEVPSNQDPLAVSASN) and 49-60 (KVNSQEETTPGT). The interval 295 to 397 (ENNINVSDRL…SSKPRAAKAH (103 aa)) is RNA-binding. Residues 369-381 (TSPNTTNTKVTTR) show a composition bias toward low complexity. Composition is skewed to polar residues over residues 399 to 408 (IATSSKFSRV) and 415 to 435 (ESTVSSQYLSDDNELSLGQQQ). Aspartate 457 serves as the catalytic For protease activity; shared with dimeric partner. An integrase-type zinc finger-like region spans residues 579–636 (NVNKSKSVNKYPYPLIHRMLGHANFRSIQKSLKKNAVTYLKESDIEWSNASTYQCPDC). In terms of domain architecture, Integrase catalytic spans 656-831 (ESYEPFQYLH…AGLDITTILP (176 aa)). Mg(2+) contacts are provided by aspartate 667 and aspartate 732. Disordered stretches follow at residues 1005–1038 (GGTIESDTTSPRHSSTFTARNQKRPGSPNDMIDL), 1057–1135 (GGTE…KSSK), 1146–1165 (LPLPDLTHKSPTDTSDVSKD), and 1170–1205 (HSRQTNSSLGGMDDSNVLTTTKSKKRSLEDNETEIE). 2 stretches are compositionally biased toward polar residues: residues 1009–1024 (ESDTTSPRHSSTFTAR) and 1065–1082 (QRNSDTNIKYRTTNSTPS). The segment covering 1151-1165 (LTHKSPTDTSDVSKD) has biased composition (basic and acidic residues). The short motif at 1193-1227 (KKRSLEDNETEIEVSRDTWNNKNMRSLEPPRSKKR) is the Bipartite nuclear localization signal element. Residues 1353–1491 (NDYYITQLDI…DILGLEIKYQ (139 aa)) enclose the Reverse transcriptase Ty1/copia-type domain. Mg(2+) is bound by residues aspartate 1361, aspartate 1442, aspartate 1443, aspartate 1625, glutamate 1667, and aspartate 1700. The region spanning 1625 to 1767 (DASYGNQPYY…IKTFKLLTNK (143 aa)) is the RNase H Ty1/copia-type domain.

As to quaternary structure, the capsid protein forms a homotrimer, from which the VLPs are assembled. The protease is a homodimer, whose active site consists of two apposed aspartic acid residues. Post-translationally, initially, virus-like particles (VLPs) are composed of the structural unprocessed proteins Gag and Gag-Pol, and also contain the host initiator methionine tRNA (tRNA(i)-Met) which serves as a primer for minus-strand DNA synthesis, and a dimer of genomic Ty RNA. Processing of the polyproteins occurs within the particle and proceeds by an ordered pathway, called maturation. First, the protease (PR) is released by autocatalytic cleavage of the Gag-Pol polyprotein, and this cleavage is a prerequisite for subsequent processing at the remaining sites to release the mature structural and catalytic proteins. Maturation takes place prior to the RT reaction and is required to produce transposition-competent VLPs.

The protein resides in the cytoplasm. Its subcellular location is the nucleus. It catalyses the reaction DNA(n) + a 2'-deoxyribonucleoside 5'-triphosphate = DNA(n+1) + diphosphate. The catalysed reaction is Endonucleolytic cleavage to 5'-phosphomonoester.. In terms of biological role, capsid protein (CA) is the structural component of the virus-like particle (VLP), forming the shell that encapsulates the retrotransposons dimeric RNA genome. The particles are assembled from trimer-clustered units and there are holes in the capsid shells that allow for the diffusion of macromolecules. CA also has nucleocapsid-like chaperone activity, promoting primer tRNA(i)-Met annealing to the multipartite primer-binding site (PBS), dimerization of Ty2 RNA and initiation of reverse transcription. Its function is as follows. The aspartyl protease (PR) mediates the proteolytic cleavages of the Gag and Gag-Pol polyproteins after assembly of the VLP. Functionally, reverse transcriptase/ribonuclease H (RT) is a multifunctional enzyme that catalyzes the conversion of the retro-elements RNA genome into dsDNA within the VLP. The enzyme displays a DNA polymerase activity that can copy either DNA or RNA templates, and a ribonuclease H (RNase H) activity that cleaves the RNA strand of RNA-DNA heteroduplexes during plus-strand synthesis and hydrolyzes RNA primers. The conversion leads to a linear dsDNA copy of the retrotransposon that includes long terminal repeats (LTRs) at both ends. Integrase (IN) targets the VLP to the nucleus, where a subparticle preintegration complex (PIC) containing at least integrase and the newly synthesized dsDNA copy of the retrotransposon must transit the nuclear membrane. Once in the nucleus, integrase performs the integration of the dsDNA into the host genome. The chain is Transposon Ty2-OR2 Gag-Pol polyprotein (TY2B-OR2) from Saccharomyces cerevisiae (strain ATCC 204508 / S288c) (Baker's yeast).